The primary structure comprises 388 residues: 2-methylene-furan-3-one reductase (388 aa).

The transit peptide at 1-60 (MEALLSSTTLQLKPLHPPSSFSSLHSPFSSISVLRVKGSKKAETFIQRSNFSTVLPLRVS) directs the protein to the chloroplast. NADP(+) contacts are provided by residues lysine 125, 240–241 (GV), 263–266 (STGK), tyrosine 281, 330–332 (FVV), and 377–378 (RA). Lysine 125 lines the substrate pocket.

This sequence belongs to the zinc-containing alcohol dehydrogenase family. Quinone oxidoreductase subfamily. As to quaternary structure, monomer.

The protein resides in the plastid. Its subcellular location is the chloroplast. The catalysed reaction is 4-hydroxy-2,5-dimethyl-furan-3(2H)-one + NADP(+) = 4-hydroxy-5-methyl-2-methylenefuran-3(2H)-one + NADPH + H(+). In terms of biological role, enone oxidoreductase involved in the biosynthesis of 4-hydroxy-2,5-dimethyl-3(2H)-furanone (HDMF or furaneol). Can use both NADH and NADPH as the electron donor. The sequence is that of 2-methylene-furan-3-one reductase (EO) from Solanum lycopersicum (Tomato).